Here is a 200-residue protein sequence, read N- to C-terminus: Nucleoside triphosphate pyrophosphatase (200 aa).

Catalysis depends on Asp-79, which acts as the Proton acceptor.

The protein belongs to the Maf family. The cofactor is a divalent metal cation.

The protein resides in the cytoplasm. The catalysed reaction is a ribonucleoside 5'-triphosphate + H2O = a ribonucleoside 5'-phosphate + diphosphate + H(+). The enzyme catalyses a 2'-deoxyribonucleoside 5'-triphosphate + H2O = a 2'-deoxyribonucleoside 5'-phosphate + diphosphate + H(+). Its function is as follows. Nucleoside triphosphate pyrophosphatase. May have a dual role in cell division arrest and in preventing the incorporation of modified nucleotides into cellular nucleic acids. The sequence is that of Nucleoside triphosphate pyrophosphatase from Legionella pneumophila subsp. pneumophila (strain Philadelphia 1 / ATCC 33152 / DSM 7513).